A 50-amino-acid polypeptide reads, in one-letter code: Temporin-SHb (50 aa).

Residues 1–10 (FLGTINLSLC) form the signal peptide. The propeptide occupies 11 to 35 (EQERDADEEERRDEPDESDVEVEKR). Residues 12 to 31 (QERDADEEERRDEPDESDVE) are disordered. The span at 14 to 30 (RDADEEERRDEPDESDV) shows a compositional bias: acidic residues. Leu-48 bears the Leucine amide mark.

This sequence belongs to the frog skin active peptide (FSAP) family. Temporin subfamily. Expressed by the skin glands.

Its subcellular location is the secreted. Its function is as follows. Amphipathic alpha-helical peptide with no antimicrobial activity. Does not display anti-leishmania activity. Does not show hemolytic activity (LC(50)&gt;116 uM). This chain is Temporin-SHb, found in Pelophylax saharicus (Sahara frog).